The sequence spans 156 residues: Cyanate hydratase (156 aa).

Residues arginine 96, glutamate 99, and serine 122 contribute to the active site.

The protein belongs to the cyanase family.

It catalyses the reaction cyanate + hydrogencarbonate + 3 H(+) = NH4(+) + 2 CO2. Its function is as follows. Catalyzes the reaction of cyanate with bicarbonate to produce ammonia and carbon dioxide. In Pseudomonas aeruginosa (strain UCBPP-PA14), this protein is Cyanate hydratase.